A 193-amino-acid chain; its full sequence is UPF0314 protein Pden_1914 (193 aa).

Helical transmembrane passes span 13–33 (APYW…LWIG), 62–82 (WYTP…WLVA), 148–168 (LPVW…TWLI), and 172–192 (LALN…WQAA).

This sequence belongs to the UPF0314 family.

The protein resides in the cell membrane. This Paracoccus denitrificans (strain Pd 1222) protein is UPF0314 protein Pden_1914.